The sequence spans 170 residues: Cathelicidin antimicrobial peptide (170 aa).

A signal peptide spans 1-30 (MKTQMDGHSLGRWSLVLLLLGLVMPLAIVA). A propeptide spans 31–131 (QVLSYKEAVL…DISCDKDNRR (101 aa)) (cathelin-like domain (CLD)). 2 disulfide bridges follow: cysteine 86–cysteine 97 and cysteine 108–cysteine 125. Positions 150-162 (FKRIVQRIKDFLR) are active core.

The protein belongs to the cathelicidin family. Monomer, homodimer or homotrimer (in vitro). Oligomerizes as tetra- or hexamer in solution (in vitro). In terms of processing, proteolytically cleaved by proteinase PRTN3 into antibacterial peptide LL-37. Proteolytically cleaved by cathepsin CTSG and neutrophil elastase ELANE. Post-translationally, resistant to proteolytic degradation in solution, and when bound to both zwitterionic (mimicking mammalian membranes) and negatively charged membranes (mimicking bacterial membranes). After secretion onto the skin surface, the CAMP gene product is processed by a serine protease-dependent mechanism into multiple novel antimicrobial peptides distinct from and shorter than cathelicidin LL-37. These peptides show enhanced antimicrobial action, acquiring the ability to kill skin pathogens such as S.aureus, E.coli and C.albicans. These peptides have lost the ability to stimulate CXCL8/IL8 release from keratinocytes. The peptides act synergistically, killing bacteria at lower concentrations when present together, and maintain activity at increased salt condition.

It is found in the secreted. Its subcellular location is the vesicle. In terms of biological role, antimicrobial protein that is an integral component of the innate immune system. Binds to bacterial lipopolysaccharides (LPS). Acts via neutrophil N-formyl peptide receptors to enhance the release of CXCL2. Postsecretory processing generates multiple cathelicidin antimicrobial peptides with various lengths which act as a topical antimicrobial defense in sweat on skin. The unprocessed precursor form, cathelicidin antimicrobial peptide, inhibits the growth of Gram-negative E.coli and E.aerogenes with efficiencies comparable to that of the mature peptide LL-37 (in vitro). Antimicrobial peptide that is an integral component of the innate immune system. Binds to bacterial lipopolysaccharides (LPS). Causes membrane permeabilization by forming transmembrane pores (in vitro). Causes lysis of E.coli. Exhibits antimicrobial activity against Gram-negative bacteria such as P.aeruginosa, S.typhimurium, E.aerogenes, E.coli and P.syringae, Gram-positive bacteria such as L.monocytogenes, S.epidermidis, S.pyogenes and S.aureus, as well as vancomycin-resistant enterococci (in vitro). Exhibits antimicrobial activity against methicillin-resistant S.aureus, P.mirabilis, and C.albicans in low-salt media, but not in media containing 100 mM NaCl (in vitro). Forms chiral supramolecular assemblies with quinolone signal (PQS) molecules of P.aeruginosa, which may lead to interference of bacterial quorum signaling and perturbance of bacterial biofilm formation. May form supramolecular fiber-like assemblies on bacterial membranes. Induces cytokine and chemokine producation as well as TNF/TNFA and CSF2/GMCSF production in normal human keratinocytes. Exhibits hemolytic activity against red blood cells. Functionally, exhibits antimicrobial activity against E.coli and B.megaterium (in vitro). In Pongo pygmaeus (Bornean orangutan), this protein is Cathelicidin antimicrobial peptide.